Consider the following 185-residue polypeptide: Peptidyl-tRNA hydrolase (185 aa).

Position 14 (Tyr14) interacts with tRNA. His19 acts as the Proton acceptor in catalysis. Residues Tyr65, Asn67, and Asn113 each coordinate tRNA.

The protein belongs to the PTH family. Monomer.

The protein localises to the cytoplasm. It catalyses the reaction an N-acyl-L-alpha-aminoacyl-tRNA + H2O = an N-acyl-L-amino acid + a tRNA + H(+). Functionally, hydrolyzes ribosome-free peptidyl-tRNAs (with 1 or more amino acids incorporated), which drop off the ribosome during protein synthesis, or as a result of ribosome stalling. Its function is as follows. Catalyzes the release of premature peptidyl moieties from peptidyl-tRNA molecules trapped in stalled 50S ribosomal subunits, and thus maintains levels of free tRNAs and 50S ribosomes. This chain is Peptidyl-tRNA hydrolase, found in Rickettsia canadensis (strain McKiel).